The primary structure comprises 390 residues: Elongation factor Ts 2, mitochondrial (390 aa).

The N-terminal 24 residues, 1-24, are a transit peptide targeting the mitochondrion; it reads MMIFSTAVLRLCATSRIGAVTKRA. The span at 30 to 40 shows a compositional bias: low complexity; it reads SSASSSSSSSS. The segment at 30 to 54 is disordered; that stretch reads SSASSSSSSSSPTQSMPPQRYTHHQ.

This sequence belongs to the EF-Ts family.

The protein localises to the mitochondrion. Associates with the EF-Tu.GDP complex and induces the exchange of GDP to GTP. It remains bound to the aminoacyl-tRNA.EF-Tu.GTP complex up to the GTP hydrolysis stage on the ribosome. This is Elongation factor Ts 2, mitochondrial from Thalassiosira pseudonana (Marine diatom).